Reading from the N-terminus, the 1038-residue chain is Activated CDC42 kinase 1 (1038 aa).

An SAM-like domain region spans residues 1-110 (MQPEEGTGWL…TSPAPGGPAG (110 aa)). Residues 90–114 (PPHHSQSTFRKTSPAPGGPAGEGPL) are disordered. A Protein kinase domain is found at 126 to 385 (LRLLEKLGDG…PTFVALRDFL (260 aa)). Residues 132-140 (LGDGSFGVV) and K158 each bind ATP. The Proton acceptor role is filled by D252. Y284 carries the phosphotyrosine; by SRC and autocatalysis modification. Positions 388-448 (AQPTDMRALQ…PRNVVTSVAG (61 aa)) constitute an SH3 domain. The CRIB domain occupies 454–466 (ISQPLQNSFIHTG). The interval 497–535 (LSVELSTSRPPQHLGGVKKPTYDPVSEDQDPLSSDFKRL) is disordered. Y518 carries the phosphotyrosine modification. The tract at residues 623 to 652 (DWDARPLPPPPAYDDVAQDEDDFEICSINS) is required for interaction with SRC. Positions 632 to 635 (PPAY) are required for interaction with NEDD4. Disordered regions lie at residues 659–702 (VPAG…SSAQ) and 718–840 (LQAP…GPRA). S724 is subject to Phosphoserine. An EBD domain region spans residues 733 to 876 (GDDKPQVPPR…SYLERYQRFL (144 aa)). Composition is skewed to pro residues over residues 738-749 (QVPPRVPIPPRP), 772-783 (PASPPRVPPREP), and 794-805 (PLVPPGSSPLPP). At Y827 the chain carries Phosphotyrosine. The residue at position 839 (R839) is an Omega-N-methylarginine. Phosphotyrosine is present on residues Y859 and Y872. Position 881 is a phosphoserine (S881). The interval 917-957 (LDPKANFSTNNSNPGARPPPPRATARLPQRGCPGDGPEAGR) is disordered. The UBA domain maps to 958-996 (PADKIQMAMVHGVTTEECQAALQCHGWSVQRAAQYLKVE).

This sequence belongs to the protein kinase superfamily. Tyr protein kinase family. As to quaternary structure, interacts with NEDD4 (via WW3 domain). NEDD4L and EGF promote association with NEDD4. Homodimer. Interacts with AR, CDC42, WWASL and WWOX. Interacts with CSPG4 (activated). Interacts with MERTK (activated); stimulates autophosphorylation. May interact (phosphorylated) with HSP90AB1; maintains kinase activity. Interacts with NPHP1. Interacts with SNX9 (via SH3 domain). Interacts with SRC (via SH2 and SH3 domain). Interacts with EGFR, and this interaction is dependent on EGF stimulation and kinase activity of EGFR. Interacts (via kinase domain) with AKT1. Part of a collagen stimulated complex involved in cell migration composed of CDC42, CRK, TNK2 and BCAR1/p130cas. Interacts with BCAR1/p130cas via SH3 domains. Forms complexes with GRB2 and numerous receptor tyrosine kinases (RTK) including LTK, AXL or PDGFRL, in which GRB2 promotes RTK recruitment by TNK2. The cofactor is Mg(2+). In terms of processing, autophosphorylation regulates kinase activity. Phosphorylation on Tyr-518 is required for interaction with SRC and is observed during association with clathrin-coated pits. Polyubiquitinated by NEDD4 and NEDD4L. Degradation can be induced by EGF and is lysosome-dependent. As to expression, the Tyr-284 phosphorylated form shows a significant increase in expression in breast cancers during the progressive stages i.e. normal to hyperplasia (ADH), ductal carcinoma in situ (DCIS), invasive ductal carcinoma (IDC) and lymph node metastatic (LNMM) stages. It also shows a significant increase in expression in prostate cancers during the progressive stages.

The protein localises to the cell membrane. The protein resides in the nucleus. Its subcellular location is the endosome. It localises to the cell junction. It is found in the adherens junction. The protein localises to the cytoplasmic vesicle membrane. The protein resides in the cytoplasmic vesicle. Its subcellular location is the clathrin-coated vesicle. It localises to the membrane. It is found in the clathrin-coated pit. The protein localises to the cytoplasm. The protein resides in the perinuclear region. Its subcellular location is the cytosol. The catalysed reaction is L-tyrosyl-[protein] + ATP = O-phospho-L-tyrosyl-[protein] + ADP + H(+). It catalyses the reaction L-seryl-[protein] + ATP = O-phospho-L-seryl-[protein] + ADP + H(+). It carries out the reaction L-threonyl-[protein] + ATP = O-phospho-L-threonyl-[protein] + ADP + H(+). Its activity is regulated as follows. Inhibited by AIM-100 (4-amino-5,6-biaryl-furo[2,3-d]pyrimidine), which suppresses activating phosphorylation at Tyr-284. Repressed by dasatinib. In terms of biological role, non-receptor tyrosine-protein and serine/threonine-protein kinase that is implicated in cell spreading and migration, cell survival, cell growth and proliferation. Transduces extracellular signals to cytosolic and nuclear effectors. Phosphorylates AKT1, AR, MCF2, WASL and WWOX. Implicated in trafficking and clathrin-mediated endocytosis through binding to epidermal growth factor receptor (EGFR) and clathrin. Binds to both poly- and mono-ubiquitin and regulates ligand-induced degradation of EGFR, thereby contributing to the accumulation of EGFR at the limiting membrane of early endosomes. Downstream effector of CDC42 which mediates CDC42-dependent cell migration via phosphorylation of BCAR1. May be involved both in adult synaptic function and plasticity and in brain development. Activates AKT1 by phosphorylating it on 'Tyr-176'. Phosphorylates AR on 'Tyr-267' and 'Tyr-363' thereby promoting its recruitment to androgen-responsive enhancers (AREs). Phosphorylates WWOX on 'Tyr-287'. Phosphorylates MCF2, thereby enhancing its activity as a guanine nucleotide exchange factor (GEF) toward Rho family proteins. Contributes to the control of AXL receptor levels. Confers metastatic properties on cancer cells and promotes tumor growth by negatively regulating tumor suppressor such as WWOX and positively regulating pro-survival factors such as AKT1 and AR. Phosphorylates WASP. The chain is Activated CDC42 kinase 1 (TNK2) from Homo sapiens (Human).